We begin with the raw amino-acid sequence, 295 residues long: Pyridoxal 5'-phosphate synthase subunit PdxS (295 aa).

Aspartate 25 serves as a coordination point for D-ribose 5-phosphate. Lysine 82 serves as the catalytic Schiff-base intermediate with D-ribose 5-phosphate. Glycine 154 contributes to the D-ribose 5-phosphate binding site. Arginine 166 contacts D-glyceraldehyde 3-phosphate. D-ribose 5-phosphate is bound by residues glycine 215 and 236–237 (GS).

It belongs to the PdxS/SNZ family. In terms of assembly, in the presence of PdxT, forms a dodecamer of heterodimers.

It carries out the reaction aldehydo-D-ribose 5-phosphate + D-glyceraldehyde 3-phosphate + L-glutamine = pyridoxal 5'-phosphate + L-glutamate + phosphate + 3 H2O + H(+). It participates in cofactor biosynthesis; pyridoxal 5'-phosphate biosynthesis. Functionally, catalyzes the formation of pyridoxal 5'-phosphate from ribose 5-phosphate (RBP), glyceraldehyde 3-phosphate (G3P) and ammonia. The ammonia is provided by the PdxT subunit. Can also use ribulose 5-phosphate and dihydroxyacetone phosphate as substrates, resulting from enzyme-catalyzed isomerization of RBP and G3P, respectively. This Actinobacillus pleuropneumoniae serotype 7 (strain AP76) protein is Pyridoxal 5'-phosphate synthase subunit PdxS.